A 120-amino-acid chain; its full sequence is Ribosome-binding factor A (120 aa).

The protein belongs to the RbfA family. As to quaternary structure, monomer. Binds 30S ribosomal subunits, but not 50S ribosomal subunits or 70S ribosomes.

It is found in the cytoplasm. Functionally, one of several proteins that assist in the late maturation steps of the functional core of the 30S ribosomal subunit. Associates with free 30S ribosomal subunits (but not with 30S subunits that are part of 70S ribosomes or polysomes). Required for efficient processing of 16S rRNA. May interact with the 5'-terminal helix region of 16S rRNA. The protein is Ribosome-binding factor A of Buchnera aphidicola subsp. Acyrthosiphon pisum (strain 5A).